Here is a 310-residue protein sequence, read N- to C-terminus: Fucose-specific lectin (310 aa).

6 consecutive repeat copies span residues 1-53, 54-103, 104-151, 152-209, 210-256, and 257-310. Positions 1-310 are 6 X approximate tandem repeats; sequence MSTPGAQEVL…LGRRALPPAE (310 aa). Residues arginine 25, glutamate 37, tryptophan 44, arginine 73, glutamate 85, tryptophan 94, arginine 126, glutamate 138, tryptophan 146, arginine 177, glutamine 189, tryptophan 198, arginine 230, glutamine 242, arginine 277, and glutamate 291 each coordinate beta-L-fucose.

This sequence belongs to the fungal fucose-specific lectin family.

Its function is as follows. Lectin that specifically binds to L-fucose and weakly reacts with mannose and N-acetyl-neuraminic acid. Has strongest preference for the alpha-1,6-fucosylated chain (core fucose) on glycoproteins among alpha-1,2-, alpha-1,3-, alpha-1,4-, and alpha-1,6-fucosylated chains. Binds to fucose residues of IgE in mice and human, causing antigen-independent IgE-mediated mast cell activation and anaphylactoid reactions in mice and is possibly implicated in allergic response to Aspergillus oryzae in humans. Induces secretion of pro-inflammatory cytokines IL6 and IL8 implicated in ocular diseases such as mycotic keratitis, probably through its interaction with host toll-like receptors TLR2 and TLR4, followed by up-regulation of pro-inflammatory cytokines. The sequence is that of Fucose-specific lectin from Aspergillus oryzae (Yellow koji mold).